We begin with the raw amino-acid sequence, 3357 residues long: Versican core protein (3357 aa).

The signal sequence occupies residues 1–23 (MLINMKGILWMCSTLLLTHALHQ). Residues 24–146 (AKMETSPPVK…EDTQDTMSLA (123 aa)) form the Ig-like V-type domain. 5 disulfides stabilise this stretch: Cys44/Cys130, Cys172/Cys243, Cys196/Cys217, Cys270/Cys333, and Cys294/Cys315. An N-linked (GlcNAc...) asparagine glycan is attached at Asn57. Link domains lie at 150-245 (VVFH…YCYV) and 251-347 (DVFH…YCFK). Asn330, Asn351, and Asn441 each carry an N-linked (GlcNAc...) asparagine glycan. Residues 348-1308 (PKQNISEATT…IIEVRENKTG (961 aa)) are GAG-alpha (glucosaminoglycan attachment domain). Positions 625–634 (EPKTNGKVTE) are enriched in basic and acidic residues. The tract at residues 625 to 646 (EPKTNGKVTEDEFGQSQPTTTF) is disordered. Ser660 carries O-linked (Xyl...) (chondroitin sulfate) serine glycosylation. 2 disordered regions span residues 801–863 (WPGD…KPLE) and 881–908 (TSTS…TTST). An N-linked (GlcNAc...) asparagine glycan is attached at Asn807. N-linked (GlcNAc...) asparagine glycosylation is found at Asn914 and Asn951. Disordered stretches follow at residues 1010-1088 (SPGA…YPPG) and 1252-1288 (DHMT…PAAG). Composition is skewed to polar residues over residues 1017–1042 (TGVS…SSTA) and 1275–1286 (SKTQELSTSTPA). N-linked (GlcNAc...) asparagine glycans are attached at residues Asn1305 and Asn1371. Residues 1309–3051 (RLSDMIVSGH…VEGTAVYLPG (1743 aa)) are GAG-beta. Over residues 1396–1406 (DPEAAEARRGQ) the composition is skewed to basic and acidic residues. Disordered regions lie at residues 1396 to 1421 (DPEA…DSSA) and 1458 to 1524 (TYPE…AIEQ). Composition is skewed to polar residues over residues 1411–1421 (APSQNFPDSSA) and 1487–1498 (WSESITESSPNL). 2 O-linked (Xyl...) (chondroitin sulfate) serine glycosylation sites follow: Ser1517 and Ser1599. The segment at 1664 to 1705 (LPSPDARPTTVWNSNSTSEWVSDKSFEGRKKKENEDEEGAVN) is disordered. Polar residues predominate over residues 1673–1683 (TVWNSNSTSEW). Asn1678 carries N-linked (GlcNAc...) asparagine glycosylation. A compositionally biased stretch (basic and acidic residues) spans 1684 to 1697 (VSDKSFEGRKKKEN). O-linked (Xyl...) (chondroitin sulfate) serine glycans are attached at residues Ser1907 and Ser1931. The interval 1926 to 1965 (VGMGGSDDERVRDTQTSSSIPTTSDNIYPVPDSKGPDSTV) is disordered. The span at 1939 to 1951 (TQTSSSIPTTSDN) shows a compositional bias: polar residues. N-linked (GlcNAc...) asparagine glycosylation is present at Asn2053. Residues Ser2219 and Ser2226 are each glycosylated (O-linked (Xyl...) (chondroitin sulfate) serine). A glycan (N-linked (GlcNAc...) asparagine) is linked at Asn2243. Residues 2308-2322 (TLSHTGTEEPTTSTL) are compositionally biased toward polar residues. Disordered regions lie at residues 2308–2374 (TLSH…ATSP) and 2475–2494 (YPTS…EGIE). The N-linked (GlcNAc...) asparagine glycan is linked to Asn2361. Residues 2475–2486 (YPTSTLPSTEPY) show a composition bias toward low complexity. Phosphoserine occurs at positions 2585 and 2586. Asn2626 carries N-linked (GlcNAc...) asparagine glycosylation. 3 O-linked (Xyl...) (chondroitin sulfate) serine glycosylation sites follow: Ser2696, Ser2697, and Ser2741. The segment at 2853 to 2908 (LGGNVHRTEPPSMSRDPALDVSEDESKHKLLEELETSPTKPETSQDFPNKAKDHIP) is disordered. The span at 2888 to 2899 (TSPTKPETSQDF) shows a compositional bias: polar residues. A glycan (N-linked (GlcNAc...) asparagine) is linked at Asn3029. Residues 3051–3087 (GPDLCKTNPCLNGGTCYPTETSYVCTCAPGYSGDQCE) enclose the EGF-like 1 domain. Cystine bridges form between Cys3055-Cys3066, Cys3060-Cys3075, Cys3077-Cys3086, Cys3093-Cys3104, Cys3098-Cys3113, Cys3115-Cys3124, Cys3131-Cys3142, Cys3159-Cys3251, Cys3227-Cys3243, Cys3258-Cys3301, and Cys3287-Cys3314. In terms of domain architecture, EGF-like 2; calcium-binding spans 3089 to 3125 (DFDECHSNPCRNGATCVDGFNTFRCLCLPSYVGALCE). The C-type lectin domain maps to 3138–3252 (FQGQCYKYFA…CNYHLTYTCK (115 aa)). One can recognise a Sushi domain in the interval 3256-3316 (VACGQPPVVE…WAMPKITCMN (61 aa)). N-linked (GlcNAc...) asparagine glycosylation is found at Asn3331 and Asn3341. The span at 3331–3342 (NSSSAKDNSINT) shows a compositional bias: polar residues. The segment at 3331–3357 (NSSSAKDNSINTSKHEHRWSRRQETRR) is disordered.

Belongs to the aggrecan/versican proteoglycan family. As to quaternary structure, interacts with FBLN1. Phosphorylated by FAM20C in the extracellular medium. Post-translationally, proteolytically cleaved by ADAMTS5 and ADAMTS15 in the pericellular matrix surrounding myoblasts, facilitating myoblast contact and fusion which is required for skeletal muscle development and regeneration. In terms of tissue distribution, expressed in the retina (at protein level). Isoform V2: Only expressed in brain.

Its subcellular location is the secreted. The protein resides in the extracellular space. The protein localises to the extracellular matrix. It localises to the cell projection. It is found in the cilium. Its subcellular location is the photoreceptor outer segment. The protein resides in the interphotoreceptor matrix. In terms of biological role, may play a role in intercellular signaling and in connecting cells with the extracellular matrix. May take part in the regulation of cell motility, growth and differentiation. Binds hyaluronic acid. The sequence is that of Versican core protein (Vcan) from Mus musculus (Mouse).